Reading from the N-terminus, the 448-residue chain is UDP-N-acetylmuramate--L-alanine ligase (448 aa).

118-124 provides a ligand contact to ATP; the sequence is GTHGKTT.

The protein belongs to the MurCDEF family.

The protein resides in the cytoplasm. It catalyses the reaction UDP-N-acetyl-alpha-D-muramate + L-alanine + ATP = UDP-N-acetyl-alpha-D-muramoyl-L-alanine + ADP + phosphate + H(+). It participates in cell wall biogenesis; peptidoglycan biosynthesis. Its function is as follows. Cell wall formation. This is UDP-N-acetylmuramate--L-alanine ligase from Flavobacterium psychrophilum (strain ATCC 49511 / DSM 21280 / CIP 103535 / JIP02/86).